The primary structure comprises 266 residues: Serine/arginine-rich splicing factor 12 (266 aa).

A disordered region spans residues 42–266; the sequence is ARPRRPRAPR…SRSYHHKNSW (225 aa). The segment covering 43–62 has biased composition (basic residues); it reads RPRRPRAPRPRLRLRGRPGR. The segment covering 102-114 has biased composition (basic and acidic residues); that stretch reads KSKERHLCSPSDH. The span at 115 to 127 shows a compositional bias: basic residues; it reads RRSRSPSQRRSRS. Positions 133-144 are enriched in basic and acidic residues; sequence GRDRRHSDSLKE. Low complexity predominate over residues 151–166; it reads SYSQSKSRSKSLPRQS. Positions 183–194 are enriched in basic residues; that stretch reads GRSRSKSLPKRS. Composition is skewed to polar residues over residues 202–212 and 235–244; these read SRSPQKQTGSG and AYTSSGSKTQ. The segment covering 245–266 has biased composition (basic residues); that stretch reads TTKHSHLRSHSRSRSYHHKNSW.

It belongs to the splicing factor SR family.

The protein resides in the nucleus. Functionally, splicing factor that seems to antagonize SR proteins in pre-mRNA splicing regulation. This chain is Serine/arginine-rich splicing factor 12 (Srsf12), found in Mus musculus (Mouse).